The sequence spans 382 residues: Alkane 1-monooxygenase 2 (382 aa).

A run of 4 helical transmembrane segments spans residues 17-37 (GYLAFWAIMVPLVPFSAFVGV), 45-65 (WAWFMYAFIFGIIPVLDYLVG), 88-108 (VSAIAMGFVWIAVLFYAGHIF), and 114-134 (GLLGKIGWIVSIGTVGGIIAI). The Fe cation site is built by His138, His142, His168, His172, and His173. The chain crosses the membrane as a helical span at residues 236–256 (ALFAATFGLLWGWQGVVFFLG). Fe cation contacts are provided by His312, His315, and His316.

Belongs to the fatty acid desaturase type 1 family. AlkB subfamily. Fe(3+) serves as cofactor.

Its subcellular location is the cell inner membrane. The catalysed reaction is octane + 2 reduced [rubredoxin] + O2 + 2 H(+) = 2 oxidized [rubredoxin] + octan-1-ol + H2O. Its pathway is hydrocarbon metabolism; alkane degradation. In terms of biological role, catalyzes the hydroxylation of n-alkanes in the presence of a NADH-rubredoxin reductase and rubredoxin. It preferably hydroxylases C8-C16 hydrocarbons. The chain is Alkane 1-monooxygenase 2 (alkB2) from Alcanivorax borkumensis (strain ATCC 700651 / DSM 11573 / NCIMB 13689 / SK2).